A 406-amino-acid chain; its full sequence is Alpha-1-antitrypsin (406 aa).

Positions 1 to 24 are cleaved as a signal peptide; that stretch reads MTSSISWGLLLLAGLCCLVPSFLA. Serine 33 bears the Phosphoserine mark. N-linked (GlcNAc...) asparagine glycosylation is found at asparagine 59, asparagine 96, and asparagine 260. The segment at 362 to 381 is RCL; sequence GTTVLEAVPMSIPPDVCFKN. Serine 372 is modified (phosphoserine).

Belongs to the serpin family. Interacts with CELA2A. Interacts with ERGIC3 and LMAN1/ERGIC53. Interacts with PRSS1/Trypsin. As to expression, plasma.

The protein resides in the secreted. Its function is as follows. Inhibitor of serine proteases. Can inhibit elastase, trypsin, chymotrypsin and plasmin. The chain is Alpha-1-antitrypsin from Meriones unguiculatus (Mongolian jird).